The primary structure comprises 151 residues: Flagellar assembly factor FliW 2 (151 aa).

Belongs to the FliW family. In terms of assembly, interacts with translational regulator CsrA and flagellin(s).

Its subcellular location is the cytoplasm. In terms of biological role, acts as an anti-CsrA protein, binds CsrA and prevents it from repressing translation of its target genes, one of which is flagellin. Binds to flagellin and participates in the assembly of the flagellum. This chain is Flagellar assembly factor FliW 2, found in Desulfotalea psychrophila (strain LSv54 / DSM 12343).